Reading from the N-terminus, the 82-residue chain is Putative membrane protein insertion efficiency factor (82 aa).

The protein belongs to the UPF0161 family.

The protein resides in the cell membrane. Its function is as follows. Could be involved in insertion of integral membrane proteins into the membrane. This Streptococcus thermophilus (strain ATCC BAA-491 / LMD-9) protein is Putative membrane protein insertion efficiency factor.